Here is a 432-residue protein sequence, read N- to C-terminus: MQRTCVLIVLIVTSTMWTPDPDVYAQPRGFNYDEAQVPKYTLPDPLVMVDGTKVTSAKQWNDKRRDEVQQLFEAYMYGKVPDGETELIFTDAKGERALGGAAIRKQVKISFGEKEDAPAMDLLIYLPADAKVRVPVFLGLNFHGNHTIHKDKEIWLTESWVRTNKKFGITKNKANELSRGVAAGRWQIEKAIAKGYGVATIYCGDIDPDFNFPSNGIQAYYYKKDQTIPEKGQWGTIAAWAFGLSCAMDYFETDTDIDHKKVAVLGHSRLGKTSLWAGAIDTRFALTISNCSGCGGAALSRRRFGETVRRINTSFPHWFCSRFHQYNDKEDKLPIDQHMLIALCAPRPVLINSATEDKWADPHGEFLAAQGADAVYRMLGTGGLDAKKWPEPNKLVKSTIGYHLRPGKHDVTARDWDVYIEFADHHMTGGAE.

The N-terminal stretch at 1-25 is a signal peptide; that stretch reads MQRTCVLIVLIVTSTMWTPDPDVYA. Positions 266–271 match the GXSYXG catalytic site motif motif; sequence GHSRLG. The active-site Nucleophile is Ser268. Residues Lys272 and Trp359 each contribute to the substrate site. His409 (charge relay system) is an active-site residue.

This sequence belongs to the carbohydrate esterase 15 (CE15) family. Requires Does not require metal ions for activity. as cofactor.

The protein localises to the periplasm. Is inhibited by PMSF and by NaF in vitro, which is consistent with the catalytic nucleophile being a serine. Functionally, displays some glucuronoyl esterase activity in vitro, since it is able to hydrolyze methyl 4-O-methyl-D-glucopyranosyluronate, allyl D-glucuronate, benzyl D-glucuronate and D-glucuronic acid methyl ester. However, esters of glucuronic acid are probably not its biological substrate, as they are not present in the marine environment. Can also hydrolyze a range of other esters, including p-nitrophenyl acetate. More likely biologically-relevant substrates for MZ0003 and other marine bacterial CE15s are algal cell wall polysaccharides, as these would be readily available in this environment and could be used as energy sources. In Unknown prokaryotic organism, this protein is Carbohydrate esterase MZ0003.